Here is a 184-residue protein sequence, read N- to C-terminus: ESX-1 secretion-associated protein EspD (184 aa).

The segment at 33–56 (IGVGSAATPDTGPDLDNAHGQAET) is disordered.

It is found in the secreted. Functionally, required for ESX-1 function. Required for the maintenance of adequate cellular levels of both EspA and EspC. Facilitates EsxA secretion. The polypeptide is ESX-1 secretion-associated protein EspD (Mycobacterium tuberculosis (strain CDC 1551 / Oshkosh)).